The primary structure comprises 43 residues: Protein PsbN (43 aa).

Residues 5–27 traverse the membrane as a helical segment; it reads TLVAIPISCLLVSFTGYALYTAF.

Belongs to the PsbN family.

The protein localises to the plastid. It localises to the chloroplast thylakoid membrane. Its function is as follows. May play a role in photosystem I and II biogenesis. In Sphagnum cuspidatum (Bog moss), this protein is Protein PsbN.